Consider the following 283-residue polypeptide: Diaminopimelate epimerase (283 aa).

Positions 13, 46, and 66 each coordinate substrate. The Proton donor role is filled by Cys75. Substrate is bound by residues 76–77 (GN), Asn166, Asn199, and 217–218 (ER). Cys226 (proton acceptor) is an active-site residue. 227 to 228 (GT) contacts substrate.

The protein belongs to the diaminopimelate epimerase family. Homodimer.

Its subcellular location is the cytoplasm. It catalyses the reaction (2S,6S)-2,6-diaminopimelate = meso-2,6-diaminopimelate. Its pathway is amino-acid biosynthesis; L-lysine biosynthesis via DAP pathway; DL-2,6-diaminopimelate from LL-2,6-diaminopimelate: step 1/1. Its function is as follows. Catalyzes the stereoinversion of LL-2,6-diaminopimelate (L,L-DAP) to meso-diaminopimelate (meso-DAP), a precursor of L-lysine and an essential component of the bacterial peptidoglycan. The chain is Diaminopimelate epimerase from Herminiimonas arsenicoxydans.